The primary structure comprises 228 residues: NAD(P)H-hydrate epimerase (228 aa).

The region spanning 9–209 is the YjeF N-terminal domain; that stretch reads VRAVERLAHR…LLGLTPAFLA (201 aa). 53-57 provides a ligand contact to (6S)-NADPHX; the sequence is NNGGD. K(+) is bound by residues Asn-54 and Asp-115. Residues 119–125 and Asp-148 contribute to the (6S)-NADPHX site; that span reads GIGLARP. Residue Ser-151 coordinates K(+).

The protein belongs to the NnrE/AIBP family. It depends on K(+) as a cofactor.

It catalyses the reaction (6R)-NADHX = (6S)-NADHX. The catalysed reaction is (6R)-NADPHX = (6S)-NADPHX. Catalyzes the epimerization of the S- and R-forms of NAD(P)HX, a damaged form of NAD(P)H that is a result of enzymatic or heat-dependent hydration. This is a prerequisite for the S-specific NAD(P)H-hydrate dehydratase to allow the repair of both epimers of NAD(P)HX. The protein is NAD(P)H-hydrate epimerase of Bordetella parapertussis (strain 12822 / ATCC BAA-587 / NCTC 13253).